The sequence spans 408 residues: Histidine--tRNA ligase (408 aa).

The protein belongs to the class-II aminoacyl-tRNA synthetase family. Homodimer.

Its subcellular location is the cytoplasm. It catalyses the reaction tRNA(His) + L-histidine + ATP = L-histidyl-tRNA(His) + AMP + diphosphate + H(+). In Campylobacter jejuni subsp. jejuni serotype O:2 (strain ATCC 700819 / NCTC 11168), this protein is Histidine--tRNA ligase.